The primary structure comprises 246 residues: tRNA pseudouridine synthase A (246 aa).

D52 (nucleophile) is an active-site residue. Y111 is a binding site for substrate.

The protein belongs to the tRNA pseudouridine synthase TruA family. Homodimer.

It catalyses the reaction uridine(38/39/40) in tRNA = pseudouridine(38/39/40) in tRNA. Functionally, formation of pseudouridine at positions 38, 39 and 40 in the anticodon stem and loop of transfer RNAs. This chain is tRNA pseudouridine synthase A, found in Borreliella afzelii (strain PKo) (Borrelia afzelii).